Consider the following 357-residue polypeptide: Geranylgeranyl pyrophosphate synthase spyE (357 aa).

Positions 36-60 are disordered; the sequence is EAQSQAVPGTRTETEPTGSSPSDLQ. The span at 50-59 shows a compositional bias: polar residues; it reads EPTGSSPSDL. 3 residues coordinate isopentenyl diphosphate: Lys84, Arg87, and His116. 2 residues coordinate Mg(2+): Asp123 and Asp127. Arg132 contacts dimethylallyl diphosphate. Residue Arg133 participates in isopentenyl diphosphate binding. Positions 210, 211, and 244 each coordinate dimethylallyl diphosphate. Asp247 is a binding site for Mg(2+). Dimethylallyl diphosphate-binding residues include Asn251, Lys261, and Lys271.

Belongs to the FPP/GGPP synthase family. The cofactor is Mg(2+).

It carries out the reaction isopentenyl diphosphate + dimethylallyl diphosphate = (2E)-geranyl diphosphate + diphosphate. The enzyme catalyses isopentenyl diphosphate + (2E)-geranyl diphosphate = (2E,6E)-farnesyl diphosphate + diphosphate. The catalysed reaction is isopentenyl diphosphate + (2E,6E)-farnesyl diphosphate = (2E,6E,10E)-geranylgeranyl diphosphate + diphosphate. It functions in the pathway secondary metabolite biosynthesis; terpenoid biosynthesis. Its function is as follows. Geranylgeranyl pyrophosphate synthase; part of the gene cluster that mediates the biosynthesis of meroterpenoids called sartorypyrones. Within the pathway, spyE provides the spyF cosubstrate geranylgeranyl pyrophosphate (GGPP) for the prenylation of triacetic acid lactone (TAL). The biosynthesis of sartorypyrones begins with the production of triacetic acid lactone (TAL) by the NR-PKS spyA using one molecule of acetyl-CoA and two molecules of malonyl-CoA. The prenyltransferase spyF then conjugates geranylgeranyl pyrophosphate (GGPP) to TAL to form geranylgeranyl-triacetate lactone, for which the pathway-specific geranylgeranyl pyrophosphate synthase (GGPS) spyE is required to provide GGPP. Subsequently, geranylgeranyl-triacetate lactone is epoxidized at the terminal olein by the FAD-dependent monooxygenase spyC, followed by cyclization of the terpenoid component catalyzed by the terpene cyclase spyD to produce both the bicyclic sartorypyrone F and the monocyclic sartorypyrone D. Finally, the last step of the biosynthesis involves the acetylation of the meroterpenoids sartorypyrones D and F by the acetyltransferase SpyB to produce sartorypyrones A and G, respectively. This is Geranylgeranyl pyrophosphate synthase spyE from Aspergillus fumigatus (strain ATCC MYA-4609 / CBS 101355 / FGSC A1100 / Af293) (Neosartorya fumigata).